The primary structure comprises 78 residues: Acyl carrier protein (78 aa).

Residues 1–75 enclose the Carrier domain; sequence MIKEKILSIV…DLISVVKNST (75 aa). Ser-35 carries the post-translational modification O-(pantetheine 4'-phosphoryl)serine.

It belongs to the acyl carrier protein (ACP) family. In terms of processing, 4'-phosphopantetheine is transferred from CoA to a specific serine of apo-ACP by AcpS. This modification is essential for activity because fatty acids are bound in thioester linkage to the sulfhydryl of the prosthetic group.

The protein localises to the cytoplasm. Its pathway is lipid metabolism; fatty acid biosynthesis. In terms of biological role, carrier of the growing fatty acid chain in fatty acid biosynthesis. This is Acyl carrier protein (acpP) from Shigella flexneri.